The primary structure comprises 252 residues: UPF0714 protein YndL (252 aa).

Residues 33 to 51 (IVKLLMIFMVFTPISSIYA) form a helical membrane-spanning segment.

Belongs to the UPF0714 family.

The protein resides in the cell membrane. The chain is UPF0714 protein YndL (yndL) from Bacillus subtilis (strain 168).